Reading from the N-terminus, the 212-residue chain is FMN-dependent NADH:quinone oxidoreductase (212 aa).

FMN is bound by residues serine 10 and 17–19 (SFS).

The protein belongs to the azoreductase type 1 family. In terms of assembly, homodimer. The cofactor is FMN.

The enzyme catalyses 2 a quinone + NADH + H(+) = 2 a 1,4-benzosemiquinone + NAD(+). The catalysed reaction is N,N-dimethyl-1,4-phenylenediamine + anthranilate + 2 NAD(+) = 2-(4-dimethylaminophenyl)diazenylbenzoate + 2 NADH + 2 H(+). Its function is as follows. Quinone reductase that provides resistance to thiol-specific stress caused by electrophilic quinones. Also exhibits azoreductase activity. Catalyzes the reductive cleavage of the azo bond in aromatic azo compounds to the corresponding amines. The protein is FMN-dependent NADH:quinone oxidoreductase of Malacoplasma penetrans (strain HF-2) (Mycoplasma penetrans).